Reading from the N-terminus, the 524-residue chain is Probable pectinesterase/pectinesterase inhibitor 19 (524 aa).

The first 22 residues, 1–22, serve as a signal peptide directing secretion; sequence MLVKVFSFFILMITMVVIGVSK. Residues 23 to 172 are pectinesterase inhibitor 19; the sequence is EYCDDKQSCQ…ISRARIALAL (150 aa). A pectinesterase 19 region spans residues 215–510; sequence DVVVAKDGTG…FTVAKLLDGE (296 aa). Residues N265 and N281 are each glycosylated (N-linked (GlcNAc...) asparagine). T290 lines the substrate pocket. The active-site Proton donor; for pectinesterase activity is D343. The cysteines at positions 357 and 377 are disulfide-linked. The active-site Nucleophile; for pectinesterase activity is D364. N-linked (GlcNAc...) asparagine glycosylation is present at N412. Substrate is bound by residues R430 and W432.

This sequence in the N-terminal section; belongs to the PMEI family. It in the C-terminal section; belongs to the pectinesterase family. As to expression, expressed in siliques, but not in flower buds.

Its subcellular location is the secreted. The protein resides in the cell wall. The catalysed reaction is [(1-&gt;4)-alpha-D-galacturonosyl methyl ester](n) + n H2O = [(1-&gt;4)-alpha-D-galacturonosyl](n) + n methanol + n H(+). It functions in the pathway glycan metabolism; pectin degradation; 2-dehydro-3-deoxy-D-gluconate from pectin: step 1/5. Its function is as follows. Acts in the modification of cell walls via demethylesterification of cell wall pectin. This chain is Probable pectinesterase/pectinesterase inhibitor 19 (PME19), found in Arabidopsis thaliana (Mouse-ear cress).